The primary structure comprises 420 residues: uncharacterized protein (420 aa).

It belongs to the Rv1128c/1148c/1588c/1702c/1945/3466 family.

This is an uncharacterized protein from Mycobacterium tuberculosis (strain CDC 1551 / Oshkosh).